The sequence spans 264 residues: S-adenosylmethionine decarboxylase proenzyme (264 aa).

The active-site Schiff-base intermediate with substrate; via pyruvic acid is Ser-112. A Pyruvic acid (Ser); by autocatalysis modification is found at Ser-112. The active-site Proton acceptor; for processing activity is His-117. The Proton donor; for catalytic activity role is filled by Cys-140.

It belongs to the prokaryotic AdoMetDC family. Type 2 subfamily. Heterooctamer of four alpha and four beta chains arranged as a tetramer of alpha/beta heterodimers. Requires pyruvate as cofactor. Is synthesized initially as an inactive proenzyme. Formation of the active enzyme involves a self-maturation process in which the active site pyruvoyl group is generated from an internal serine residue via an autocatalytic post-translational modification. Two non-identical subunits are generated from the proenzyme in this reaction, and the pyruvate is formed at the N-terminus of the alpha chain, which is derived from the carboxyl end of the proenzyme. The post-translation cleavage follows an unusual pathway, termed non-hydrolytic serinolysis, in which the side chain hydroxyl group of the serine supplies its oxygen atom to form the C-terminus of the beta chain, while the remainder of the serine residue undergoes an oxidative deamination to produce ammonia and the pyruvoyl group blocking the N-terminus of the alpha chain.

It carries out the reaction S-adenosyl-L-methionine + H(+) = S-adenosyl 3-(methylsulfanyl)propylamine + CO2. It functions in the pathway amine and polyamine biosynthesis; S-adenosylmethioninamine biosynthesis; S-adenosylmethioninamine from S-adenosyl-L-methionine: step 1/1. Functionally, catalyzes the decarboxylation of S-adenosylmethionine to S-adenosylmethioninamine (dcAdoMet), the propylamine donor required for the synthesis of the polyamines spermine and spermidine from the diamine putrescine. The chain is S-adenosylmethionine decarboxylase proenzyme from Shigella boydii serotype 4 (strain Sb227).